Consider the following 393-residue polypeptide: Triacylglycerol lipase 1 (393 aa).

The first 20 residues, 1–20 (MKWLLVAVLTSLTIFSALTQ), serve as a signal peptide directing secretion. A glycan (N-linked (GlcNAc...) asparagine) is linked at asparagine 41. Serine 166 (nucleophile) is an active-site residue. Residue asparagine 261 is glycosylated (N-linked (GlcNAc...) asparagine). Residues aspartate 334 and histidine 363 each act as charge relay system in the active site.

It belongs to the AB hydrolase superfamily. Lipase family. Expressed in seedlings, roots, leaves, flowers and siliques. Specifically expressed in the epidermis.

The protein resides in the secreted. It carries out the reaction a triacylglycerol + H2O = a diacylglycerol + a fatty acid + H(+). The catalysed reaction is 1,2,3-tributanoylglycerol + H2O = dibutanoylglycerol + butanoate + H(+). It catalyses the reaction 1,2,3-trioctanoylglycerol + H2O = dioctanoylglycerol + octanoate + H(+). Its pathway is lipid metabolism; glycerolipid metabolism. Its function is as follows. Triacylglycerol (TAG) lipase active on triolein, trioctanoin, tributyrin and 1,3-Diolein, but not on phospho- and galactolipids. Involved but dispensable for TAG storage breakdown during seed germination. The sequence is that of Triacylglycerol lipase 1 from Arabidopsis thaliana (Mouse-ear cress).